Reading from the N-terminus, the 108-residue chain is uncharacterized protein (108 aa).

Cystine bridges form between Cys-44–Cys-82, Cys-60–Cys-78, and Cys-63–Cys-91.

It belongs to the arthropod CHH/MIH/GIH/VIH hormone family.

This is an uncharacterized protein from Caenorhabditis elegans.